Consider the following 245-residue polypeptide: 3-deoxy-manno-octulosonate cytidylyltransferase (245 aa).

It belongs to the KdsB family.

The protein resides in the cytoplasm. It carries out the reaction 3-deoxy-alpha-D-manno-oct-2-ulosonate + CTP = CMP-3-deoxy-beta-D-manno-octulosonate + diphosphate. It functions in the pathway nucleotide-sugar biosynthesis; CMP-3-deoxy-D-manno-octulosonate biosynthesis; CMP-3-deoxy-D-manno-octulosonate from 3-deoxy-D-manno-octulosonate and CTP: step 1/1. Its pathway is bacterial outer membrane biogenesis; lipopolysaccharide biosynthesis. Activates KDO (a required 8-carbon sugar) for incorporation into bacterial lipopolysaccharide in Gram-negative bacteria. The polypeptide is 3-deoxy-manno-octulosonate cytidylyltransferase (Rhodopseudomonas palustris (strain BisB18)).